The sequence spans 160 residues: Calsequestrin-2 (160 aa).

This sequence belongs to the calsequestrin family. As to quaternary structure, monomer, homodimer and homooligomer. Mostly monomeric in the absence of calcium. Forms higher oligomers in a calcium-dependent manner. Dimers associate to form tetramers, that then form linear homomer chains. Interacts with ASPH and TRDN. Post-translationally, phosphorylation in the C-terminus, probably by CK2, moderately increases calcium buffering capacity. N-glycosylated.

The protein localises to the sarcoplasmic reticulum lumen. In terms of biological role, calsequestrin is a high-capacity, moderate affinity, calcium-binding protein and thus acts as an internal calcium store in muscle. Calcium ions are bound by clusters of acidic residues at the protein surface, especially at the interface between subunits. Can bind around 60 Ca(2+) ions. Regulates the release of lumenal Ca(2+) via the calcium release channel RYR2; this plays an important role in triggering muscle contraction. Plays a role in excitation-contraction coupling in the heart and in regulating the rate of heart beats. The polypeptide is Calsequestrin-2 (CASQ2) (Sus scrofa (Pig)).